Consider the following 348-residue polypeptide: MENKGEKIAMNPTVQTLAQKGDKLAVKLVTRGWASLSTNQKRRAEMLAGYTPAILAFTPRRPRMTNSPPRTSRNSPGQAGKSMTMSKTELLCTVKGTTGVIPSFEDWVVSPRNVAVFPQLSLLATNFNKYRITALTVKYSPACSFETNGRVALGFNDDASDTPPTTKVGFYDLGKHVETAAQTAKDLVIPVDGKTRFIRDSASDDAKLVDFGRLVLSTYGFDKADTVVGELFIQYTIVLSDPTKTAKISQASNDKVSDGPTYVVPSVNGNELQLRVVAAGKWCIIVRGTVEGGFTKPTLIGPGISGDVDYESARPIAICELVTQMEGQMLKITKTSAEQPLKVVVYRM.

Residues 58–84 (TPRRPRMTNSPPRTSRNSPGQAGKSMT) form a disordered region. Residues 64 to 84 (MTNSPPRTSRNSPGQAGKSMT) are compositionally biased toward polar residues. A s domain, virion shell region spans residues 82-239 (SMTMSKTELL…ELFIQYTIVL (158 aa)). The tract at residues 240-348 (SDPTKTAKIS…QPLKVVVYRM (109 aa)) is p domain, projecting.

The protein belongs to the icosahedral plant coat protein family. As to quaternary structure, homodimer. Homomultimer. Ca(2+) serves as cofactor.

Its subcellular location is the virion. Its function is as follows. Capsid protein self-assembles to form an icosahedral capsid with a T=3 symmetry, about 32-35 nm in diameter, and consisting of 180 capsid proteins. Also acts as a suppressor of RNA-mediated gene silencing, also known as post-transcriptional gene silencing (PTGS), a mechanism of plant viral defense that limits the accumulation of viral RNAs. In Carnation mottle virus (isolate China/Shanghai) (CarMV), this protein is Capsid protein.